Consider the following 280-residue polypeptide: DNA repair protein RecO (280 aa).

The disordered stretch occupies residues 261–280; sequence DMAHGNHTGQEDLPATASGA.

The protein belongs to the RecO family.

In terms of biological role, involved in DNA repair and RecF pathway recombination. The polypeptide is DNA repair protein RecO (Mycolicibacterium smegmatis (strain ATCC 700084 / mc(2)155) (Mycobacterium smegmatis)).